We begin with the raw amino-acid sequence, 86 residues long: Small ribosomal subunit protein bS20 (86 aa).

The tract at residues 1–21 (MANTKSAIKAARKSLRLHDRN) is disordered.

This sequence belongs to the bacterial ribosomal protein bS20 family.

Its function is as follows. Binds directly to 16S ribosomal RNA. The chain is Small ribosomal subunit protein bS20 from Opitutus terrae (strain DSM 11246 / JCM 15787 / PB90-1).